The following is a 158-amino-acid chain: Transcription elongation factor GreA (158 aa).

Positions 10 to 76 form a coiled coil; sequence TLEGKKKLEE…QIEKMIRNAE (67 aa).

The protein belongs to the GreA/GreB family.

Its function is as follows. Necessary for efficient RNA polymerase transcription elongation past template-encoded arresting sites. The arresting sites in DNA have the property of trapping a certain fraction of elongating RNA polymerases that pass through, resulting in locked ternary complexes. Cleavage of the nascent transcript by cleavage factors such as GreA or GreB allows the resumption of elongation from the new 3'terminus. GreA releases sequences of 2 to 3 nucleotides. This is Transcription elongation factor GreA from Halalkalibacterium halodurans (strain ATCC BAA-125 / DSM 18197 / FERM 7344 / JCM 9153 / C-125) (Bacillus halodurans).